A 1033-amino-acid chain; its full sequence is Phospholipid-transporting ATPase neo1 (1033 aa).

The next 4 helical transmembrane spans lie at 133-153 (LKIGYLSTYIAPLIFVLLITL), 274-294 (TLWANTVLASDGVYGVVVYTG), 317-337 (INFYSKILCTFVLVLSIGLTF), and 344-364 (DWYISVFRYLILFSSIIPINL). Asp-408 functions as the 4-aspartylphosphate intermediate in the catalytic mechanism. Positions 408, 409, 410, 491, 528, 530, 533, 551, 580, 581, 662, 663, 664, 744, and 750 each coordinate ATP. Asp-408 serves as a coordination point for Mg(2+). Thr-410 serves as a coordination point for Mg(2+). A run of 6 helical transmembrane segments spans residues 768 to 788 (IGDGGNDVGMIQVANVGIGIV), 843 to 863 (VVYSVISAFEPIALFQGLLLV), 913 to 933 (VLISVYQGLIIQLFTFYLIGF), 939 to 959 (MLAVCFSCLIFNELIMVALQI), 965 to 985 (TIVMSELLTLMMYILSVPFLT), and 992 to 1012 (FLLGLKFYWVSALILFISLLP). Mg(2+) is bound at residue Asp-770. The ATP site is built by Asn-773 and Asp-774. Residue Asp-774 participates in Mg(2+) binding.

This sequence belongs to the cation transport ATPase (P-type) (TC 3.A.3) family. Type IV subfamily. As to quaternary structure, functions without a CDC50/LEM3 family accessory subunit. Mg(2+) is required as a cofactor.

Its subcellular location is the endosome membrane. The protein resides in the golgi apparatus membrane. It catalyses the reaction ATP + H2O + phospholipidSide 1 = ADP + phosphate + phospholipidSide 2.. The catalysed reaction is a 1,2-diacyl-sn-glycero-3-phospho-L-serine(out) + ATP + H2O = a 1,2-diacyl-sn-glycero-3-phospho-L-serine(in) + ADP + phosphate + H(+). It carries out the reaction a 1,2-diacyl-sn-glycero-3-phosphoethanolamine(out) + ATP + H2O = a 1,2-diacyl-sn-glycero-3-phosphoethanolamine(in) + ADP + phosphate + H(+). Its function is as follows. Flippase that catalyzes the hydrolysis of ATP coupled to the transport of lysophosphatidylserine, phosphatidylethanolamine, and phosphatidylserine from the lumenal to the cytosolic leaflet of the Golgi apparatus membrane and ensures the maintenance of asymmetric distribution of phospholipids. In Schizosaccharomyces pombe (strain 972 / ATCC 24843) (Fission yeast), this protein is Phospholipid-transporting ATPase neo1.